The primary structure comprises 389 residues: Methylthioribose kinase (389 aa).

ATP contacts are provided by residues Asn37, Lys52, and 106–108; that span reads EDL. A substrate-binding site is contributed by Asp224. 241 to 243 contacts ATP; that stretch reads DPE. Arg331 contributes to the substrate binding site.

This sequence belongs to the methylthioribose kinase family. In terms of assembly, homodimer.

The catalysed reaction is 5-(methylsulfanyl)-D-ribose + ATP = 5-(methylsulfanyl)-alpha-D-ribose 1-phosphate + ADP + H(+). It participates in amino-acid biosynthesis; L-methionine biosynthesis via salvage pathway; S-methyl-5-thio-alpha-D-ribose 1-phosphate from S-methyl-5'-thioadenosine (hydrolase route): step 2/2. Catalyzes the phosphorylation of methylthioribose into methylthioribose-1-phosphate. The protein is Methylthioribose kinase of Exiguobacterium sibiricum (strain DSM 17290 / CCUG 55495 / CIP 109462 / JCM 13490 / 255-15).